The sequence spans 172 residues: Large ribosomal subunit protein uL10 (172 aa).

It belongs to the universal ribosomal protein uL10 family. In terms of assembly, part of the ribosomal stalk of the 50S ribosomal subunit. The N-terminus interacts with L11 and the large rRNA to form the base of the stalk. The C-terminus forms an elongated spine to which L12 dimers bind in a sequential fashion forming a multimeric L10(L12)X complex.

Functionally, forms part of the ribosomal stalk, playing a central role in the interaction of the ribosome with GTP-bound translation factors. The sequence is that of Large ribosomal subunit protein uL10 from Rhodopseudomonas palustris (strain BisA53).